The primary structure comprises 429 residues: TNF receptor-associated factor family protein DDB_G0267744 (429 aa).

The segment at 22–60 (CVICSHLQVDIYQCVEGHFACKNCFLKMIELKKQCMTCR) adopts an RING-type; degenerate zinc-finger fold. 2 TRAF-type zinc fingers span residues 151 to 203 (HHLK…GEFN) and 204 to 265 (NHQD…SNSE).

Belongs to the TNF receptor-associated factor family.

The protein localises to the cytoplasm. Its function is as follows. Probable adapter protein and signal transducer that links members of the tumor necrosis factor receptor family to different signaling pathways by association with the receptor cytoplasmic domain and kinases. In Dictyostelium discoideum (Social amoeba), this protein is TNF receptor-associated factor family protein DDB_G0267744.